Consider the following 523-residue polypeptide: 2-isopropylmalate synthase (523 aa).

One can recognise a Pyruvate carboxyltransferase domain in the interval 5 to 267; sequence VIIFDTTLRD…HTNINHHEIW (263 aa). 4 residues coordinate Mn(2+): Asp14, His202, His204, and Asn238. The regulatory domain stretch occupies residues 392 to 523; it reads RLDYFSVQSG…QNKENNKETV (132 aa).

Belongs to the alpha-IPM synthase/homocitrate synthase family. LeuA type 1 subfamily. As to quaternary structure, homodimer. Mn(2+) is required as a cofactor.

Its subcellular location is the cytoplasm. It carries out the reaction 3-methyl-2-oxobutanoate + acetyl-CoA + H2O = (2S)-2-isopropylmalate + CoA + H(+). It functions in the pathway amino-acid biosynthesis; L-leucine biosynthesis; L-leucine from 3-methyl-2-oxobutanoate: step 1/4. Catalyzes the condensation of the acetyl group of acetyl-CoA with 3-methyl-2-oxobutanoate (2-ketoisovalerate) to form 3-carboxy-3-hydroxy-4-methylpentanoate (2-isopropylmalate). The polypeptide is 2-isopropylmalate synthase (Salmonella paratyphi A (strain ATCC 9150 / SARB42)).